A 593-amino-acid chain; its full sequence is Developmental and secondary metabolism regulator VEL1 (593 aa).

Polar residues predominate over residues 1-16 (MSNIVVSNETKSQSVR). The interval 1 to 21 (MSNIVVSNETKSQSVRTTKDG) is disordered. The Velvet domain maps to 21 to 212 (GRQIRYNLQV…AEQGCRVRIR (192 aa)). A Nuclear localization signal motif is present at residues 35 to 40 (ERARAC). A disordered region spans residues 218-569 (RRRENKSSKE…PGSPDMEEPM (352 aa)). The span at 310–326 (PSYGSNQPQYSQQYQTP) shows a compositional bias: low complexity. The span at 327-340 (QPAPMMQPPQPPQH) shows a compositional bias: pro residues. 2 stretches are compositionally biased toward low complexity: residues 341-360 (STPY…HQAQ) and 367-389 (QQYG…QPQY). Polar residues-rich tracts occupy residues 413 to 429 (SSIT…SSHP) and 440 to 449 (GRSQQMSQPL). The segment at 443–487 (QQMSQPLHSSPQSYASSAPSHQSLPSLRPIVADKLEPVSPSYQSP) is PEST. Low complexity predominate over residues 450–465 (HSSPQSYASSAPSHQS). 2 stretches are compositionally biased toward polar residues: residues 482–505 (PSYQ…SNQH) and 512–534 (NPQT…SSTF).

Belongs to the velvet family. VeA subfamily. Component of the heterotrimeric velvet complex composed of LAE1, VEL1 and VEL2; VEL1 acting as a bridging protein between LAE1 and VEL2.

The protein resides in the nucleus. The protein localises to the cytoplasm. Its function is as follows. Component of the velvet transcription factor complex that controls sexual/asexual developmental ratio in response to light, promoting sexual development in the darkness while stimulating asexual sporulation under illumination. The velvet complex acts as a global regulator for secondary metabolite gene expression. Controls the expression of the T-toxin gene cluster. Promotes oxidative stress tolerance and acts as a virulence factors during infection. Negatively regulate mycelial pigmentation and controls sexual development, as well as asexual development during vegetative growth. The chain is Developmental and secondary metabolism regulator VEL1 from Cochliobolus heterostrophus (strain C5 / ATCC 48332 / race O) (Southern corn leaf blight fungus).